A 154-amino-acid chain; its full sequence is NADPH-dependent 7-cyano-7-deazaguanine reductase (154 aa).

The active-site Thioimide intermediate is the Cys52. Catalysis depends on Asp59, which acts as the Proton donor. Residues 74–76 (VES) and 93–94 (HE) each bind substrate.

This sequence belongs to the GTP cyclohydrolase I family. QueF type 1 subfamily.

The protein localises to the cytoplasm. The enzyme catalyses 7-aminomethyl-7-carbaguanine + 2 NADP(+) = 7-cyano-7-deazaguanine + 2 NADPH + 3 H(+). It functions in the pathway tRNA modification; tRNA-queuosine biosynthesis. In terms of biological role, catalyzes the NADPH-dependent reduction of 7-cyano-7-deazaguanine (preQ0) to 7-aminomethyl-7-deazaguanine (preQ1). The protein is NADPH-dependent 7-cyano-7-deazaguanine reductase of Sinorhizobium medicae (strain WSM419) (Ensifer medicae).